We begin with the raw amino-acid sequence, 259 residues long: Triosephosphate isomerase (259 aa).

10-12 serves as a coordination point for substrate; the sequence is NWK. Residue H102 is the Electrophile of the active site. The active-site Proton acceptor is E174. Substrate is bound by residues G180, S220, and 241-242; that span reads GG.

This sequence belongs to the triosephosphate isomerase family. As to quaternary structure, homodimer.

The protein resides in the cytoplasm. It carries out the reaction D-glyceraldehyde 3-phosphate = dihydroxyacetone phosphate. It participates in carbohydrate biosynthesis; gluconeogenesis. The protein operates within carbohydrate degradation; glycolysis; D-glyceraldehyde 3-phosphate from glycerone phosphate: step 1/1. Its function is as follows. Involved in the gluconeogenesis. Catalyzes stereospecifically the conversion of dihydroxyacetone phosphate (DHAP) to D-glyceraldehyde-3-phosphate (G3P). This Cutibacterium acnes (strain DSM 16379 / KPA171202) (Propionibacterium acnes) protein is Triosephosphate isomerase.